The chain runs to 525 residues: GMP synthase [glutamine-hydrolyzing] (525 aa).

Residues 9–207 (RILILDFGSQ…VRDICQCEAL (199 aa)) enclose the Glutamine amidotransferase type-1 domain. Cys86 functions as the Nucleophile in the catalytic mechanism. Catalysis depends on residues His181 and Glu183. A GMPS ATP-PPase domain is found at 208–400 (WTPAKIIDDA…LGLPYDMLYR (193 aa)). ATP is bound at residue 235 to 241 (SGGVDSS).

In terms of assembly, homodimer.

The catalysed reaction is XMP + L-glutamine + ATP + H2O = GMP + L-glutamate + AMP + diphosphate + 2 H(+). The protein operates within purine metabolism; GMP biosynthesis; GMP from XMP (L-Gln route): step 1/1. Its function is as follows. Catalyzes the synthesis of GMP from XMP. The sequence is that of GMP synthase [glutamine-hydrolyzing] from Salmonella typhi.